We begin with the raw amino-acid sequence, 174 residues long: NADH-quinone oxidoreductase subunit B (174 aa).

[4Fe-4S] cluster contacts are provided by Cys-53, Cys-54, Cys-118, and Cys-148.

It belongs to the complex I 20 kDa subunit family. As to quaternary structure, NDH-1 is composed of 14 different subunits. Subunits NuoB, C, D, E, F, and G constitute the peripheral sector of the complex. [4Fe-4S] cluster serves as cofactor.

It is found in the cell inner membrane. The enzyme catalyses a quinone + NADH + 5 H(+)(in) = a quinol + NAD(+) + 4 H(+)(out). In terms of biological role, NDH-1 shuttles electrons from NADH, via FMN and iron-sulfur (Fe-S) centers, to quinones in the respiratory chain. Couples the redox reaction to proton translocation (for every two electrons transferred, four hydrogen ions are translocated across the cytoplasmic membrane), and thus conserves the redox energy in a proton gradient. This is NADH-quinone oxidoreductase subunit B from Ruegeria sp. (strain TM1040) (Silicibacter sp.).